The primary structure comprises 364 residues: MKLNKIYLLSFRNLEKIELTPAHRFNIFYGKNAQGKTNLLESIFLLGTMKSFKMAKNSEMVRWGSDQSLIKGWVERDGVTREIALFIDKQGKKIKLDRKSVTKVDEFFGNLNVVVFTPEEINMVRGVPDLRRKYLDRAVFSSDVTYLHAYHDYCKILKNRNILLKSGEKSGLDVWTEKLAEYGRKVINKRLDYLHEIQELLSKFYNDISGTEEVVEIRYRPHLMDMENYEKDNCGALSEALVKCAAEEQRRGTTLVGPHRDDIDFVLNGRALKQFGSQGQQRSYVLALKMSEIDCLHQKFDSPPILLLDDMTSELDQDRNRNLMEFLKKKEMQVFITTTSLQNISLEGIENHRTFLVSEGKVLH.

Position 30-37 (30-37 (GKNAQGKT)) interacts with ATP.

The protein belongs to the RecF family.

Its subcellular location is the cytoplasm. The RecF protein is involved in DNA metabolism; it is required for DNA replication and normal SOS inducibility. RecF binds preferentially to single-stranded, linear DNA. It also seems to bind ATP. The protein is DNA replication and repair protein RecF of Geotalea uraniireducens (strain Rf4) (Geobacter uraniireducens).